A 200-amino-acid polypeptide reads, in one-letter code: NADH-quinone oxidoreductase subunit C (200 aa).

Belongs to the complex I 30 kDa subunit family. In terms of assembly, NDH-1 is composed of 14 different subunits. Subunits NuoB, C, D, E, F, and G constitute the peripheral sector of the complex.

It is found in the cell inner membrane. It catalyses the reaction a quinone + NADH + 5 H(+)(in) = a quinol + NAD(+) + 4 H(+)(out). In terms of biological role, NDH-1 shuttles electrons from NADH, via FMN and iron-sulfur (Fe-S) centers, to quinones in the respiratory chain. The immediate electron acceptor for the enzyme in this species is believed to be ubiquinone. Couples the redox reaction to proton translocation (for every two electrons transferred, four hydrogen ions are translocated across the cytoplasmic membrane), and thus conserves the redox energy in a proton gradient. The sequence is that of NADH-quinone oxidoreductase subunit C from Burkholderia ambifaria (strain MC40-6).